Consider the following 308-residue polypeptide: tRNA pseudouridine synthase B (308 aa).

Residue aspartate 47 is the Nucleophile of the active site.

Belongs to the pseudouridine synthase TruB family. Type 1 subfamily.

It catalyses the reaction uridine(55) in tRNA = pseudouridine(55) in tRNA. In terms of biological role, responsible for synthesis of pseudouridine from uracil-55 in the psi GC loop of transfer RNAs. This Rhodospirillum rubrum (strain ATCC 11170 / ATH 1.1.1 / DSM 467 / LMG 4362 / NCIMB 8255 / S1) protein is tRNA pseudouridine synthase B.